The sequence spans 54 residues: Ovomucoid (54 aa).

The Kazal-like domain maps to 4–54 (VDCSDYPRPDCTLEYMPLCGSDNKTYGNKCNFCNAVVDSNGTLTLSHFGKC). Intrachain disulfides connect C6–C36, C14–C33, and C22–C54. A glycan (N-linked (GlcNAc...) asparagine) is linked at N43.

It is found in the secreted. The polypeptide is Ovomucoid (Dendrocygna eytoni (Plumed whistling-duck)).